We begin with the raw amino-acid sequence, 70 residues long: Large ribosomal subunit protein bL31 (70 aa).

Zn(2+)-binding residues include C16, C18, C37, and C40.

Belongs to the bacterial ribosomal protein bL31 family. Type A subfamily. As to quaternary structure, part of the 50S ribosomal subunit. The cofactor is Zn(2+).

Binds the 23S rRNA. The sequence is that of Large ribosomal subunit protein bL31 from Enterobacter sp. (strain 638).